Here is a 335-residue protein sequence, read N- to C-terminus: Ornithine carbamoyltransferase (335 aa).

Residues 57 to 60 (STRT), R108, and 135 to 138 (HPTQ) contribute to the carbamoyl phosphate site. L-ornithine contacts are provided by residues N168, D232, and 236-237 (SM). Carbamoyl phosphate is bound by residues 274–275 (CL) and R319.

The protein belongs to the aspartate/ornithine carbamoyltransferase superfamily. OTCase family.

The protein localises to the cytoplasm. It catalyses the reaction carbamoyl phosphate + L-ornithine = L-citrulline + phosphate + H(+). It participates in amino-acid degradation; L-arginine degradation via ADI pathway; carbamoyl phosphate from L-arginine: step 2/2. Reversibly catalyzes the transfer of the carbamoyl group from carbamoyl phosphate (CP) to the N(epsilon) atom of ornithine (ORN) to produce L-citrulline. The polypeptide is Ornithine carbamoyltransferase (Limosilactobacillus reuteri (strain DSM 20016) (Lactobacillus reuteri)).